Consider the following 278-residue polypeptide: MTILHSTDFFKAGISTVAIEPRLPQSAFPEHHHDFHEIVIVEQGTGIHVFNGQPYTIGGGSVCFIRDHDRHLYEHTDNLCLTNVLYRAPDAFRFLAGVSQLLPQEQEGNYPSHWRVNQTVLQQVRHIVAQMEAMGSETDTHAVASREILFMQLLVLLRKSSLAEEATNNDARLNQLLAWLEDHFAQEICWEEVAAQFSLSLRTLHRQLKQQTGLTPQRYLNRVRLMKARHLLRHSDESVTDIAFRCGFGDSNHFSTLFRREFDWSPRDIRQGRDAILQ.

Residues 174–272 (NQLLAWLEDH…DWSPRDIRQG (99 aa)) enclose the HTH araC/xylS-type domain. DNA-binding regions (H-T-H motif) lie at residues 191–212 (EEVA…KQQT) and 239–262 (VTDI…RREF).

As to quaternary structure, binds DNA as a dimer.

The protein resides in the cytoplasm. Activates expression of the rhaBAD and rhaT operons. This chain is HTH-type transcriptional activator RhaS, found in Klebsiella pneumoniae (strain 342).